Here is a 583-residue protein sequence, read N- to C-terminus: 2-succinyl-5-enolpyruvyl-6-hydroxy-3-cyclohexene-1-carboxylate synthase (583 aa).

This sequence belongs to the TPP enzyme family. MenD subfamily. As to quaternary structure, homodimer. Requires Mg(2+) as cofactor. Mn(2+) is required as a cofactor. The cofactor is thiamine diphosphate.

It carries out the reaction isochorismate + 2-oxoglutarate + H(+) = 5-enolpyruvoyl-6-hydroxy-2-succinyl-cyclohex-3-ene-1-carboxylate + CO2. Its pathway is quinol/quinone metabolism; 1,4-dihydroxy-2-naphthoate biosynthesis; 1,4-dihydroxy-2-naphthoate from chorismate: step 2/7. It functions in the pathway quinol/quinone metabolism; menaquinone biosynthesis. Functionally, catalyzes the thiamine diphosphate-dependent decarboxylation of 2-oxoglutarate and the subsequent addition of the resulting succinic semialdehyde-thiamine pyrophosphate anion to isochorismate to yield 2-succinyl-5-enolpyruvyl-6-hydroxy-3-cyclohexene-1-carboxylate (SEPHCHC). The polypeptide is 2-succinyl-5-enolpyruvyl-6-hydroxy-3-cyclohexene-1-carboxylate synthase (Chlorobium phaeovibrioides (strain DSM 265 / 1930) (Prosthecochloris vibrioformis (strain DSM 265))).